We begin with the raw amino-acid sequence, 278 residues long: 4-deoxy-L-threo-5-hexosulose-uronate ketol-isomerase (278 aa).

Zn(2+) contacts are provided by His-196, His-198, Glu-203, and His-245.

This sequence belongs to the KduI family. In terms of assembly, homohexamer. Zn(2+) serves as cofactor.

The catalysed reaction is 5-dehydro-4-deoxy-D-glucuronate = 3-deoxy-D-glycero-2,5-hexodiulosonate. The protein operates within glycan metabolism; pectin degradation; 2-dehydro-3-deoxy-D-gluconate from pectin: step 4/5. Catalyzes the isomerization of 5-dehydro-4-deoxy-D-glucuronate to 3-deoxy-D-glycero-2,5-hexodiulosonate. The polypeptide is 4-deoxy-L-threo-5-hexosulose-uronate ketol-isomerase (Escherichia coli (strain SMS-3-5 / SECEC)).